The sequence spans 381 residues: Heme A synthase (381 aa).

The segment at M1 to G23 is disordered. Residues T11–G23 are compositionally biased toward low complexity. 8 consecutive transmembrane segments (helical) span residues G34–G54, R120–T140, L151–S171, L185–A205, T228–I248, L285–F305, A319–L339, and S342–L362. H290 provides a ligand contact to heme. A heme-binding site is contributed by H350.

Belongs to the COX15/CtaA family. Type 2 subfamily. Interacts with CtaB. Requires heme b as cofactor.

Its subcellular location is the cell membrane. It catalyses the reaction Fe(II)-heme o + 2 A + H2O = Fe(II)-heme a + 2 AH2. Its pathway is porphyrin-containing compound metabolism; heme A biosynthesis; heme A from heme O: step 1/1. Functionally, catalyzes the conversion of heme O to heme A by two successive hydroxylations of the methyl group at C8. The first hydroxylation forms heme I, the second hydroxylation results in an unstable dihydroxymethyl group, which spontaneously dehydrates, resulting in the formyl group of heme A. This chain is Heme A synthase, found in Paracoccus denitrificans (strain Pd 1222).